The following is a 399-amino-acid chain: Peroxisome assembly protein 12 (399 aa).

Residues 1–24 (MSFYSNLPSAGQSSRGSSTSGRNG) are disordered. Topologically, residues 1-33 (MSFYSNLPSAGQSSRGSSTSGRNGVGLEPLYPT) are peroxisomal matrix. Residues 9 to 24 (SAGQSSRGSSTSGRNG) show a composition bias toward low complexity. A helical membrane pass occupies residues 34–62 (IFEIMSSQEIDSLLPASIRYLLANHLVAN). At 63–67 (FPNRY) the chain is on the cytoplasmic side. Residues 68 to 92 (TLRLNKYFFEWFQAIKGFVEWYHLK) form a helical membrane-spanning segment. Over 93–136 (TYNSTFIDRFYGLQLFSSRDRNLALTQCLNPKGQSEWPQGLQLN) the chain is Peroxisomal matrix. A helical membrane pass occupies residues 137–168 (QQQKSVIFLEKIILPYITAKLDEILEKISMNN). Residues 169–171 (IFS) are Cytoplasmic-facing. Residues 172–208 (SDETENKWPKRAFLRIYPFIKKLLALSNLLVKLLFLT) traverse the membrane as a helical segment. Over 209-277 (KRTGSVSLLQ…PRFLTFMGSQ (69 aa)) the chain is Peroxisomal matrix. Residues 278 to 305 (FFPTFIFVLRVYQWWTTQDMTTKLQKRV) form a helical membrane-spanning segment. Residues 306-399 (NDLDEDIPRP…VVTGIRKLLI (94 aa)) lie on the Cytoplasmic side of the membrane. Residues Cys-334, Cys-337, Cys-354, and Cys-357 each coordinate Zn(2+). An RING-type; degenerate zinc finger spans residues 334–373 (CPVCEKTVQNPCVLETGYVACYPCAISYLVNNEGHCPVTN).

Belongs to the pex2/pex10/pex12 family. As to quaternary structure, component of the PEX2-PEX10-PEX12 retrotranslocation channel, composed of PEX2, PEX10 and PEX12.

The protein resides in the peroxisome membrane. It participates in protein modification; protein ubiquitination. Component of a retrotranslocation channel required for peroxisome organization by mediating export of the PEX5 receptor from peroxisomes to the cytosol, thereby promoting PEX5 recycling. The retrotranslocation channel is composed of PEX2, PEX10 and PEX12; each subunit contributing transmembrane segments that coassemble into an open channel that specifically allows the passage of PEX5 through the peroxisomal membrane. PEX12 also regulates PEX5 recycling by activating the E3 ubiquitin-protein ligase activity of PEX10. When PEX5 recycling is compromised, PEX12 stimulates PEX10-mediated polyubiquitination of PEX5, leading to its subsequent degradation. This chain is Peroxisome assembly protein 12, found in Saccharomyces cerevisiae (strain ATCC 204508 / S288c) (Baker's yeast).